The following is a 500-amino-acid chain: Glutamate decarboxylase (500 aa).

K277 carries the N6-(pyridoxal phosphate)lysine modification. The segment at 469 to 500 is calmodulin-binding; sequence VHKKTDSEVQLEMITAWKKFVEEKKKKTNRVC.

The protein belongs to the group II decarboxylase family. Homodimer. Pyridoxal 5'-phosphate serves as cofactor.

It catalyses the reaction L-glutamate + H(+) = 4-aminobutanoate + CO2. Functionally, catalyzes the production of GABA. The calmodulin-binding is calcium-dependent and it is proposed that this may, directly or indirectly, form a calcium regulated control of GABA biosynthesis. In Petunia hybrida (Petunia), this protein is Glutamate decarboxylase (GAD).